Reading from the N-terminus, the 127-residue chain is uncharacterized protein (127 aa).

This is an uncharacterized protein from Saccharomyces cerevisiae (strain ATCC 204508 / S288c) (Baker's yeast).